The primary structure comprises 434 residues: Chaperone SurA (434 aa).

The first 22 residues, 1-22 (MKKWKSSLLGIAIWSLAASSMA), serve as a signal peptide directing secretion. PpiC domains follow at residues 173–274 (TVQF…KVND) and 283–383 (VTEV…EVLD).

It localises to the periplasm. The enzyme catalyses [protein]-peptidylproline (omega=180) = [protein]-peptidylproline (omega=0). Its function is as follows. Chaperone involved in the correct folding and assembly of outer membrane proteins. Recognizes specific patterns of aromatic residues and the orientation of their side chains, which are found more frequently in integral outer membrane proteins. May act in both early periplasmic and late outer membrane-associated steps of protein maturation. The sequence is that of Chaperone SurA from Photobacterium profundum (strain SS9).